Reading from the N-terminus, the 151-residue chain is 6,7-dimethyl-8-ribityllumazine synthase (151 aa).

Residues Phe15, 49 to 51 (AVE), and 73 to 75 (AVI) each bind 5-amino-6-(D-ribitylamino)uracil. Residue 78–79 (ET) participates in (2S)-2-hydroxy-3-oxobutyl phosphate binding. His81 (proton donor) is an active-site residue. Residue Phe106 coordinates 5-amino-6-(D-ribitylamino)uracil. Residue Arg120 participates in (2S)-2-hydroxy-3-oxobutyl phosphate binding.

It belongs to the DMRL synthase family. As to quaternary structure, forms an icosahedral capsid composed of 60 subunits, arranged as a dodecamer of pentamers.

The enzyme catalyses (2S)-2-hydroxy-3-oxobutyl phosphate + 5-amino-6-(D-ribitylamino)uracil = 6,7-dimethyl-8-(1-D-ribityl)lumazine + phosphate + 2 H2O + H(+). The protein operates within cofactor biosynthesis; riboflavin biosynthesis; riboflavin from 2-hydroxy-3-oxobutyl phosphate and 5-amino-6-(D-ribitylamino)uracil: step 1/2. In terms of biological role, catalyzes the formation of 6,7-dimethyl-8-ribityllumazine by condensation of 5-amino-6-(D-ribitylamino)uracil with 3,4-dihydroxy-2-butanone 4-phosphate. This is the penultimate step in the biosynthesis of riboflavin. This is 6,7-dimethyl-8-ribityllumazine synthase from Coxiella burnetii (strain CbuG_Q212) (Coxiella burnetii (strain Q212)).